Reading from the N-terminus, the 335-residue chain is Acetyl-coenzyme A carboxylase carboxyl transferase subunit alpha (335 aa).

The CoA carboxyltransferase C-terminal domain maps to 40-294; sequence QLETLAARRR…KEAIEKHLNA (255 aa).

This sequence belongs to the AccA family. Acetyl-CoA carboxylase is a heterohexamer composed of biotin carboxyl carrier protein (AccB), biotin carboxylase (AccC) and two subunits each of ACCase subunit alpha (AccA) and ACCase subunit beta (AccD).

The protein resides in the cytoplasm. The enzyme catalyses N(6)-carboxybiotinyl-L-lysyl-[protein] + acetyl-CoA = N(6)-biotinyl-L-lysyl-[protein] + malonyl-CoA. It participates in lipid metabolism; malonyl-CoA biosynthesis; malonyl-CoA from acetyl-CoA: step 1/1. Its function is as follows. Component of the acetyl coenzyme A carboxylase (ACC) complex. First, biotin carboxylase catalyzes the carboxylation of biotin on its carrier protein (BCCP) and then the CO(2) group is transferred by the carboxyltransferase to acetyl-CoA to form malonyl-CoA. This Prochlorococcus marinus (strain AS9601) protein is Acetyl-coenzyme A carboxylase carboxyl transferase subunit alpha.